A 152-amino-acid chain; its full sequence is Large ribosomal subunit protein uL13 (152 aa).

It belongs to the universal ribosomal protein uL13 family. Part of the 50S ribosomal subunit.

Functionally, this protein is one of the early assembly proteins of the 50S ribosomal subunit, although it is not seen to bind rRNA by itself. It is important during the early stages of 50S assembly. The polypeptide is Large ribosomal subunit protein uL13 (Wolbachia pipientis wMel).